We begin with the raw amino-acid sequence, 841 residues long: Alpha-glucan phosphorylase 2, cytosolic (841 aa).

The segment at 1–24 is disordered; sequence MANANGKAATSLPEKISAKANPEA. An N6-(pyridoxal phosphate)lysine modification is found at Lys-687.

Belongs to the glycogen phosphorylase family. Pyridoxal 5'-phosphate is required as a cofactor.

It is found in the cytoplasm. It carries out the reaction [(1-&gt;4)-alpha-D-glucosyl](n) + phosphate = [(1-&gt;4)-alpha-D-glucosyl](n-1) + alpha-D-glucose 1-phosphate. Its function is as follows. Phosphorylase is an important allosteric enzyme in carbohydrate metabolism. Enzymes from different sources differ in their regulatory mechanisms and in their natural substrates. However, all known phosphorylases share catalytic and structural properties. In Arabidopsis thaliana (Mouse-ear cress), this protein is Alpha-glucan phosphorylase 2, cytosolic (PHS2).